The following is a 206-amino-acid chain: Ribosomal RNA small subunit methyltransferase G (206 aa).

Residues Gly73, Leu78, 124–125, and Arg139 each bind S-adenosyl-L-methionine; that span reads VE.

It belongs to the methyltransferase superfamily. RNA methyltransferase RsmG family.

It localises to the cytoplasm. It catalyses the reaction guanosine(527) in 16S rRNA + S-adenosyl-L-methionine = N(7)-methylguanosine(527) in 16S rRNA + S-adenosyl-L-homocysteine. Functionally, specifically methylates the N7 position of guanine in position 527 of 16S rRNA. The polypeptide is Ribosomal RNA small subunit methyltransferase G (Pectobacterium atrosepticum (strain SCRI 1043 / ATCC BAA-672) (Erwinia carotovora subsp. atroseptica)).